Reading from the N-terminus, the 145-residue chain is Large ribosomal subunit protein uL16 (145 aa).

Belongs to the universal ribosomal protein uL16 family. As to quaternary structure, part of the 50S ribosomal subunit.

Functionally, binds 23S rRNA and is also seen to make contacts with the A and possibly P site tRNAs. The sequence is that of Large ribosomal subunit protein uL16 from Lactobacillus johnsonii (strain CNCM I-12250 / La1 / NCC 533).